A 387-amino-acid polypeptide reads, in one-letter code: Phosphoglycerate kinase (387 aa).

Residues 21–23 (DLN), arginine 36, 59–62 (HLGR), arginine 113, and arginine 146 contribute to the substrate site. Residues lysine 197, glutamate 314, and 340–343 (GGDT) contribute to the ATP site.

This sequence belongs to the phosphoglycerate kinase family. In terms of assembly, monomer.

It is found in the cytoplasm. It catalyses the reaction (2R)-3-phosphoglycerate + ATP = (2R)-3-phospho-glyceroyl phosphate + ADP. Its pathway is carbohydrate degradation; glycolysis; pyruvate from D-glyceraldehyde 3-phosphate: step 2/5. The sequence is that of Phosphoglycerate kinase from Pseudomonas putida (strain W619).